A 242-amino-acid polypeptide reads, in one-letter code: Biosynthetic peptidoglycan transglycosylase (242 aa).

Residues 19 to 39 (LMVVLAIFWGGGIALFSVAPV) traverse the membrane as a helical segment.

The protein belongs to the glycosyltransferase 51 family.

It localises to the cell inner membrane. It carries out the reaction [GlcNAc-(1-&gt;4)-Mur2Ac(oyl-L-Ala-gamma-D-Glu-L-Lys-D-Ala-D-Ala)](n)-di-trans,octa-cis-undecaprenyl diphosphate + beta-D-GlcNAc-(1-&gt;4)-Mur2Ac(oyl-L-Ala-gamma-D-Glu-L-Lys-D-Ala-D-Ala)-di-trans,octa-cis-undecaprenyl diphosphate = [GlcNAc-(1-&gt;4)-Mur2Ac(oyl-L-Ala-gamma-D-Glu-L-Lys-D-Ala-D-Ala)](n+1)-di-trans,octa-cis-undecaprenyl diphosphate + di-trans,octa-cis-undecaprenyl diphosphate + H(+). It participates in cell wall biogenesis; peptidoglycan biosynthesis. Its function is as follows. Peptidoglycan polymerase that catalyzes glycan chain elongation from lipid-linked precursors. The protein is Biosynthetic peptidoglycan transglycosylase of Escherichia coli O127:H6 (strain E2348/69 / EPEC).